The primary structure comprises 144 residues: Ribosomal RNA large subunit methyltransferase H (144 aa).

S-adenosyl-L-methionine is bound by residues leucine 68, glycine 96, and phenylalanine 112–phenylalanine 117.

It belongs to the RNA methyltransferase RlmH family. In terms of assembly, homodimer.

The protein localises to the cytoplasm. The catalysed reaction is pseudouridine(1915) in 23S rRNA + S-adenosyl-L-methionine = N(3)-methylpseudouridine(1915) in 23S rRNA + S-adenosyl-L-homocysteine + H(+). Functionally, specifically methylates the pseudouridine at position 1915 (m3Psi1915) in 23S rRNA. This Mycoplasmopsis synoviae (strain 53) (Mycoplasma synoviae) protein is Ribosomal RNA large subunit methyltransferase H.